We begin with the raw amino-acid sequence, 595 residues long: MGAVRIAPGLALLLCCPVLSSAYALVDADDVMTKEEQIFLLHRAQAQCQKRLKEVLQRPADIMESDKGWASASTSGKPKKEKASGKLYPESEEDKEVPTGSRHRGRPCLPEWDHILCWPLGAPGEVVAVPCPDYIYDFNHKGHAYRRCDRNGSWELVPGHNRTWANYSECVKFLTNETREREVFDRLGMIYTVGYSVSLASLTVAVLILAYFRRLHCTRNYIHMHLFLSFMLRAVSIFVKDAVLYSGATLDEAERLTEEELRAIAQAPPPPTAAAGYAGCRVAVTFFLYFLATNYYWILVEGLYLHSLIFMAFFSEKKYLWGFTVFGWGLPAVFVAVWVSVRATLANTGCWDLSSGNKKWIIQVPILASIVLNFILFINIVRVLATKLRETNAGRCDTRQQYRKLLKSTLVLMPLFGVHYIVFMATPYTEVSGTLWQVQMHYEMLFNSFQGFFVAIIYCFCNGEVQAEIKKSWSRWTLALDFKRKARSGSSSYSYGPMVSHTSVTNVGPRAGLGLPLSPRLLPAAAATTTATTNGHPPIPGHTKPGAPTLPATPPATAAPKDDGFLNGSCSGLDEEASAPERPPALLQEEWETVM.

Residues 1–28 form the signal peptide; it reads MGAVRIAPGLALLLCCPVLSSAYALVDA. Over 29–188 the chain is Extracellular; it reads DDVMTKEEQI…REREVFDRLG (160 aa). Cystine bridges form between cysteine 48–cysteine 117, cysteine 108–cysteine 148, and cysteine 131–cysteine 170. Positions 66-103 are disordered; it reads DKGWASASTSGKPKKEKASGKLYPESEEDKEVPTGSRH. N-linked (GlcNAc...) asparagine glycosylation is found at asparagine 151, asparagine 161, asparagine 166, and asparagine 176. The helical transmembrane segment at 189–209 threads the bilayer; that stretch reads MIYTVGYSVSLASLTVAVLIL. At 210–223 the chain is on the cytoplasmic side; it reads AYFRRLHCTRNYIH. The chain crosses the membrane as a helical span at residues 224-244; sequence MHLFLSFMLRAVSIFVKDAVL. The Extracellular segment spans residues 245 to 294; sequence YSGATLDEAERLTEEELRAIAQAPPPPTAAAGYAGCRVAVTFFLYFLATN. Residues 295 to 315 form a helical membrane-spanning segment; that stretch reads YYWILVEGLYLHSLIFMAFFS. At 316-318 the chain is on the cytoplasmic side; that stretch reads EKK. A helical membrane pass occupies residues 319–339; that stretch reads YLWGFTVFGWGLPAVFVAVWV. Residues 340 to 360 are Extracellular-facing; it reads SVRATLANTGCWDLSSGNKKW. Residues 361–381 traverse the membrane as a helical segment; it reads IIQVPILASIVLNFILFINIV. Topologically, residues 382-404 are cytoplasmic; the sequence is RVLATKLRETNAGRCDTRQQYRK. Residues 405 to 425 traverse the membrane as a helical segment; sequence LLKSTLVLMPLFGVHYIVFMA. Residues 426–439 are Extracellular-facing; that stretch reads TPYTEVSGTLWQVQ. The chain crosses the membrane as a helical span at residues 440–460; sequence MHYEMLFNSFQGFFVAIIYCF. The Cytoplasmic segment spans residues 461 to 595; that stretch reads CNGEVQAEIK…LLQEEWETVM (135 aa). An Important for interaction with G proteins motif is present at residues 473-476; sequence WSRW. The tract at residues 528-595 is disordered; the sequence is TTTATTNGHP…LLQEEWETVM (68 aa). Low complexity predominate over residues 547–559; the sequence is APTLPATPPATAA. Threonine 553 bears the Phosphothreonine mark.

Belongs to the G-protein coupled receptor 2 family. Homodimer in the absence of bound ligand. Peptide hormone binding leads to dissociation of the homodimer. In terms of processing, N-glycosylated. As to expression, high levels in the kidney, with much lower levels in aorta, heart, lung, prostate, testis, and skeletal muscle.

It is found in the cell membrane. Functionally, G-protein-coupled receptor for parathyroid hormone (PTH) and for parathyroid hormone-related peptide (PTHLH). Ligand binding causes a conformation change that triggers signaling via guanine nucleotide-binding proteins (G proteins) and modulates the activity of downstream effectors, such as adenylate cyclase (cAMP). PTH1R is coupled to G(s) G alpha proteins and mediates activation of adenylate cyclase activity. PTHLH dissociates from PTH1R more rapidly than PTH; as consequence, the cAMP response induced by PTHLH decays faster than the response induced by PTH. This chain is Parathyroid hormone/parathyroid hormone-related peptide receptor (PTH1R), found in Canis lupus familiaris (Dog).